Consider the following 195-residue polypeptide: Putative manganese efflux pump MntP (195 aa).

The next 6 membrane-spanning stretches (helical) occupy residues 3-23 (LSATLILAFGMSMDAFAASVG), 40-60 (GLIFGVIEAITPLIGWGLGLL), 68-88 (WDHWVAFTLLAFLGGRMVLAG), 106-126 (VLIATAIATSLDALAIGVGLA), 132-152 (ILHAALLIGLATLIMSTIGML), and 165-185 (AEIIGGLILIGIGCNILYSHI).

This sequence belongs to the MntP (TC 9.B.29) family.

Its subcellular location is the cell inner membrane. In terms of biological role, probably functions as a manganese efflux pump. This Sodalis glossinidius (strain morsitans) protein is Putative manganese efflux pump MntP.